The primary structure comprises 265 residues: Small ribosomal subunit protein eS4 (265 aa).

In terms of domain architecture, S4 RNA-binding spans 42 to 104 (LPLILIIRNR…TNENYRLLYD (63 aa)).

Belongs to the eukaryotic ribosomal protein eS4 family.

The protein resides in the cytoplasm. The polypeptide is Small ribosomal subunit protein eS4 (RPS4) (Zea mays (Maize)).